Reading from the N-terminus, the 406-residue chain is Methyltransferase cfoD (406 aa).

Asp-270 and Arg-312 together coordinate S-adenosyl-L-methionine. His-315 (proton acceptor) is an active-site residue.

It belongs to the class I-like SAM-binding methyltransferase superfamily. Cation-independent O-methyltransferase family.

It functions in the pathway secondary metabolite biosynthesis; flavonoid biosynthesis. Its function is as follows. Methyltransferase; part of the gene cluster that mediates the biosynthesis of chlorflavonin, a fungal flavonoid with acetolactate synthase inhibitory activity. Within the pathway, cfoD is responsible for the methylation at position C3-OH of flavonoid. The pathway begins with the PKS-NRPS hybrid synthetase cfoA that uses benzoic acid or p-hydroxybenzoic acid as a starter unit with four rounds of chain elongation using malonyl-CoA to form the chalcone skeleton. Then, a new type of chalcone isomerase, cfoK, catalyzes the conversion of the chalcone into a flavanone by a histidine-mediated oxa-Michael addition mechanism. The desaturation of flavanone to flavone is catalyzed by a new type of flavone synthase, the flavin mononucleotide (FMN)-dependent oxidoreductase cfoJ. Monooxygenases cfoF, cfoG, and P450 cfoH are responsible for the hydroxylation of the flavonoid skeleton at sites C3, C8, and C2', respectively. Like cfoF, the dehydratase cfoI also plays a role in the hydroxylation of position C3. Methyltransferases cfoB, cfoC, and cfoD then catalyze the methylation of C7-OH, C8-OH, and C3-OH, respectively. Finally, the monooxygenase cfoE is responsible for the chlorination of flavonoid at position C3'. This chain is Methyltransferase cfoD, found in Aspergillus candidus.